The following is an 873-amino-acid chain: MKKTTEIRNIFLNFFYEKKHKIMDSSTLIPDNDKTLLFTNSGMNQFKDIFLGFKKPKYIRVATAQRCIRVGGKHNDLNMIGKTNRHHTFFEMLGNFSFGSYFKSDTIQFAWELLTSKKWFDLSKEKLIVTIYYKDIESYNLWVEKTNINPKNIIFIKDKNNILYNSDNFWTMGDTGPCGPCSEIFYFFGKSINYKNIKIYDEEYIEIWNLVFMQFNLHLNGKLSRLPITSIDTGMGLERISCVLQKVNSNYSIDLFKKLIYEISKIIEIKNIKNYSLRIIADHIRSAIFLIYDGVIPSKEGRGYVLRRIIRRAIFHGNYILNKSCFFYKLVSPAINIMSYIDSKIIKKKKEIENIIKEEEKIFFFSIKKGMIFLNKNLKKIKNNILKGEIAFKLHDTFGFPIDLTNDICIKNKINVDEKGFFHAMNEQKNKSYKNSCFNKFNLKLLNNYCTKFCGYSYLKCESQILNIYNLKEEIKEIKENQEGIIILDKTPFYGESGGQVGDSGEIKSKDGVFSVIDTKKLGNYFYHYGKVIQGILKINNKITAYVNKIKRNKISLNHSSTHLLHYAINCLLDKNIIQKGSLICEKYLSFDFSYGKKINIEKINEIENIINEKIRDNVIIHSNNMDLKNALKIGAKALFKNKYKDLVRVLNIGDFSIELCGGTHANRTGDIGCFVITNFSKISSDTYRIKAITGETAIAFIQKKFNDINTISSLIKSNSNEIVNKIEKITENLKILEKKNKNLKNKIIKNYIKLIFNKIKKINNFEIIMDYFNEEIDKIILREILNKVKTNLKNGIVILASIKKDNLYIVTGVTNNLVNIITAKEIISYFKEIKSIKGGGNSYFAEAVGVVNLIDLKSMFKKIFMILSKNLK.

Zn(2+) contacts are provided by H559, H563, C661, and H665.

It belongs to the class-II aminoacyl-tRNA synthetase family. As to quaternary structure, homotetramer. Zn(2+) is required as a cofactor.

Its subcellular location is the cytoplasm. The enzyme catalyses tRNA(Ala) + L-alanine + ATP = L-alanyl-tRNA(Ala) + AMP + diphosphate. Its function is as follows. Catalyzes the attachment of alanine to tRNA(Ala) in a two-step reaction: alanine is first activated by ATP to form Ala-AMP and then transferred to the acceptor end of tRNA(Ala). Also edits incorrectly charged Ser-tRNA(Ala) and Gly-tRNA(Ala) via its editing domain. The polypeptide is Alanine--tRNA ligase (Wigglesworthia glossinidia brevipalpis).